A 176-amino-acid polypeptide reads, in one-letter code: Ribosome maturation factor RimM (176 aa).

Positions 95–169 constitute a PRC barrel domain; the sequence is EDEVYLFELE…TARIAPPPGL (75 aa).

Belongs to the RimM family. As to quaternary structure, binds ribosomal protein uS19.

The protein resides in the cytoplasm. In terms of biological role, an accessory protein needed during the final step in the assembly of 30S ribosomal subunit, possibly for assembly of the head region. Essential for efficient processing of 16S rRNA. May be needed both before and after RbfA during the maturation of 16S rRNA. It has affinity for free ribosomal 30S subunits but not for 70S ribosomes. The protein is Ribosome maturation factor RimM of Nitratidesulfovibrio vulgaris (strain ATCC 29579 / DSM 644 / CCUG 34227 / NCIMB 8303 / VKM B-1760 / Hildenborough) (Desulfovibrio vulgaris).